The following is a 586-amino-acid chain: CTP synthase 2 (586 aa).

One can recognise a Glutamine amidotransferase type-1 domain in the interval 300 to 554 (SIALVGKYTK…LAATGTLNTH (255 aa)). Active-site for GATase activity residues include C399, H526, and E528. S568, S571, and S574 each carry phosphoserine.

It belongs to the CTP synthase family.

The enzyme catalyses UTP + L-glutamine + ATP + H2O = CTP + L-glutamate + ADP + phosphate + 2 H(+). The protein operates within pyrimidine metabolism; CTP biosynthesis via de novo pathway; CTP from UDP: step 2/2. Its function is as follows. Catalyzes the ATP-dependent amination of UTP to CTP with either L-glutamine or ammonia as the source of nitrogen. Constitutes the rate-limiting enzyme in the synthesis of cytosine nucleotides. In Rattus norvegicus (Rat), this protein is CTP synthase 2 (Ctps2).